The following is a 230-amino-acid chain: UPF0173 metal-dependent hydrolase TM1040_1920 (230 aa).

The protein belongs to the UPF0173 family.

The polypeptide is UPF0173 metal-dependent hydrolase TM1040_1920 (Ruegeria sp. (strain TM1040) (Silicibacter sp.)).